A 151-amino-acid polypeptide reads, in one-letter code: 3-hydroxyacyl-[acyl-carrier-protein] dehydratase FabZ (151 aa).

His54 is an active-site residue.

It belongs to the thioester dehydratase family. FabZ subfamily.

Its subcellular location is the cytoplasm. It catalyses the reaction a (3R)-hydroxyacyl-[ACP] = a (2E)-enoyl-[ACP] + H2O. Involved in unsaturated fatty acids biosynthesis. Catalyzes the dehydration of short chain beta-hydroxyacyl-ACPs and long chain saturated and unsaturated beta-hydroxyacyl-ACPs. The chain is 3-hydroxyacyl-[acyl-carrier-protein] dehydratase FabZ from Cronobacter sakazakii (strain ATCC BAA-894) (Enterobacter sakazakii).